We begin with the raw amino-acid sequence, 221 residues long: Translation initiation factor 6 (221 aa).

This sequence belongs to the eIF-6 family.

Functionally, binds to the 50S ribosomal subunit and prevents its association with the 30S ribosomal subunit to form the 70S initiation complex. The sequence is that of Translation initiation factor 6 from Cenarchaeum symbiosum (strain A).